The following is a 432-amino-acid chain: Acetylserotonin O-methyltransferase (432 aa).

Residues Tyr146, Trp163, Asp209, 235–237 (GDF), and Arg252 each bind S-adenosyl-L-methionine. The Proton donor/acceptor role is filled by His255. The substrate site is built by Asp256, Asn302, and Gln306. Residues 373-432 (VPGARSDAAGTGSGTGNTGSGIMLQGETLESEVSAPQAGSDVGGAGNEPRSGTLKQGDWK) are disordered.

The protein belongs to the class I-like SAM-binding methyltransferase superfamily. Cation-independent O-methyltransferase family. Homodimer. Expressed predominantly in the pineal gland (at protein level). Very low expression, if any, in the retina.

It carries out the reaction N-acetylserotonin + S-adenosyl-L-methionine = melatonin + S-adenosyl-L-homocysteine + H(+). It participates in aromatic compound metabolism; melatonin biosynthesis; melatonin from serotonin: step 1/2. Its function is as follows. Catalyzes the transfer of a methyl group onto N-acetylserotonin, producing melatonin (N-acetyl-5-methoxytryptamine). In Rattus norvegicus (Rat), this protein is Acetylserotonin O-methyltransferase (Asmt).